Consider the following 50-residue polypeptide: Small, acid-soluble spore protein K (50 aa).

Positions 1–50 (MVRNKAKGFPNQNNNKFEGEPRAKDDYASKRADGSINSHPQERMRASGRR) are disordered. Composition is skewed to basic and acidic residues over residues 17–33 (FEGEPRAKDDYASKRAD) and 40–50 (PQERMRASGRR).

Belongs to the SspK family.

It localises to the spore core. This Bacillus velezensis (strain DSM 23117 / BGSC 10A6 / LMG 26770 / FZB42) (Bacillus amyloliquefaciens subsp. plantarum) protein is Small, acid-soluble spore protein K.